We begin with the raw amino-acid sequence, 244 residues long: Orotidine 5'-phosphate decarboxylase (244 aa).

Substrate contacts are provided by residues aspartate 20, lysine 42, 70–79 (DLKFFDIPAT), threonine 125, arginine 186, glutamine 195, glycine 215, and arginine 216. Lysine 72 acts as the Proton donor in catalysis.

It belongs to the OMP decarboxylase family. Type 1 subfamily. As to quaternary structure, homodimer.

It catalyses the reaction orotidine 5'-phosphate + H(+) = UMP + CO2. Its pathway is pyrimidine metabolism; UMP biosynthesis via de novo pathway; UMP from orotate: step 2/2. In terms of biological role, catalyzes the decarboxylation of orotidine 5'-monophosphate (OMP) to uridine 5'-monophosphate (UMP). This is Orotidine 5'-phosphate decarboxylase from Xylella fastidiosa (strain M23).